The following is a 271-amino-acid chain: Dioscorin dioA3 (271 aa).

An N-terminal signal peptide occupies residues 1-21 (MSSSTLLHLLLLSSLLFSCLS). One can recognise an Alpha-carbonic anhydrase domain in the interval 28-262 (DEFSYIEGNP…TNFRSVFYFE (235 aa)). A disulfide bridge links Cys53 with Cys212. His94 functions as the Proton acceptor in the catalytic mechanism. L-ascorbate is bound by residues Asp95, 120–122 (HFH), Gln139, and 208–209 (TA).

The protein belongs to the alpha-carbonic anhydrase family. Monomer. Homodimer. In terms of processing, not glycosylated. As to expression, expressed in tuber (at protein level).

It catalyses the reaction hydrogencarbonate + H(+) = CO2 + H2O. The enzyme catalyses 2 monodehydro-L-ascorbate radical + NADH + H(+) = 2 L-ascorbate + NAD(+). The carbonate dehydratase activity is not substantially changed by the addition of Zn(2+). Functionally, storage protein of tuber. Involved in protection against oxidative stress. Has carbonate dehydratase, trypsin inhibitor, dehydroascorbate (DHA) reductase and monodehydroascorbate (MDA) reductase activities. Catalyzes the reactions of carbonate dehydratase and DHA reductase independently of zinc and glutathione (GSH). The coupled reaction is capable of recycling a plant antioxidant ascorbate using ubiquitous compounds H(2)O and CO(2). Exhibits antioxidant activity. Able to scavenge 1,1-diphenyl-2-picrylhydrazyl (DPPH) radical. Exhibits immunomodulatory activity. Activates Toll-like receptor 4 signaling pathways by up-regulating the gene expression of pro-inflammatory cytokines, such as tumor necrosis factor alpha, interleukin-1 beta and interleukin-6, and chemokines RANTES and MCP-1, in mouse RAW 264.7 macrophages. Stimulates the phagocytosis of E.coli by the LPS-treated mouse macrophages. This Dioscorea japonica (Japanese yam) protein is Dioscorin dioA3.